The chain runs to 177 residues: Dual-action ribosomal maturation protein DarP (177 aa).

This sequence belongs to the DarP family.

The protein resides in the cytoplasm. In terms of biological role, member of a network of 50S ribosomal subunit biogenesis factors which assembles along the 30S-50S interface, preventing incorrect 23S rRNA structures from forming. Promotes peptidyl transferase center (PTC) maturation. The sequence is that of Dual-action ribosomal maturation protein DarP from Histophilus somni (strain 129Pt) (Haemophilus somnus).